Here is a 191-residue protein sequence, read N- to C-terminus: MIRISDAAQAHFAKLLANQEEGTQIRVFVINPGTPNAECGVSYCPPDAVEATDTALKFDLLTAYVDELSAPYLEDAEIDFVTDQLGSQLTLKAPNAKMRKVADDAPLMERVEYALQSQINPQLAGHGGRVSLMEITDEGYAILQFGGGCNGCSMVDVTLKEGIEKQLLNEFPELKGVRDLTEHQRGEHSYY.

Cys-149 and Cys-152 together coordinate [4Fe-4S] cluster.

Belongs to the NfuA family. As to quaternary structure, homodimer. It depends on [4Fe-4S] cluster as a cofactor.

In terms of biological role, involved in iron-sulfur cluster biogenesis. Binds a 4Fe-4S cluster, can transfer this cluster to apoproteins, and thereby intervenes in the maturation of Fe/S proteins. Could also act as a scaffold/chaperone for damaged Fe/S proteins. The chain is Fe/S biogenesis protein NfuA from Salmonella choleraesuis (strain SC-B67).